Reading from the N-terminus, the 286-residue chain is ATP synthase gamma chain (286 aa).

This sequence belongs to the ATPase gamma chain family. F-type ATPases have 2 components, CF(1) - the catalytic core - and CF(0) - the membrane proton channel. CF(1) has five subunits: alpha(3), beta(3), gamma(1), delta(1), epsilon(1). CF(0) has three main subunits: a, b and c.

It localises to the cell membrane. Functionally, produces ATP from ADP in the presence of a proton gradient across the membrane. The gamma chain is believed to be important in regulating ATPase activity and the flow of protons through the CF(0) complex. The polypeptide is ATP synthase gamma chain (Malacoplasma penetrans (strain HF-2) (Mycoplasma penetrans)).